The sequence spans 226 residues: MATEALHMHKDRLSAEDLDLKDPHVSSSLALFAIHNLIRRNLKACAEHAITVQPANIDAFVTYAKYTLHVLRDQLTSVDEIWFPVFAEHDPRFLAQKDAHDALYQRITAVDAQLATPPAELGQNELLSAEIAAAFAELHELTDKQYDLEEDLINQLGRKVPMDTIRGLEKKQEERRRADVKVYGHLWTAVYLLRGLDPKERAIFPPGIPKLIAGGMLTAGAMQFRR.

It functions in the pathway secondary metabolite biosynthesis. Part of the gene cluster that mediates the biosynthesis of the isocyanide xanthocillin and its derivatives. The first step of the pathway consists in the conversion of tyrosine into a vinyl-isonitrile intermediate by the isocyanide synthase xanB. Subsequent oxidative dimerization of this intermediate to form xanthocillin may involve the cytochrome P450 monooxygenase xanG, whose expression is coregulated with that of XanB. Xanthocillin can be further modified by the isonitrile hydratase-like protein xanA which introduces N-formyl groups and the methyltransferase xanE which introduces methyl groups, leading to the production of several derivatives including fumiformamide. Finally, fumiformamide can be subject to both oxidative and reductive cyclization to yield melanocins E and F, respectively. This Aspergillus fumigatus (strain ATCC MYA-4609 / CBS 101355 / FGSC A1100 / Af293) (Neosartorya fumigata) protein is Xanthocillin biosynthesis cluster protein F.